A 243-amino-acid polypeptide reads, in one-letter code: MNVSQDTIYAQASEHISDFQFDNRVAGVFSDMIRRSVPGYTQIINTIGDFADRFVMPNTQIYDLGCSLGAATLSIRRQIQGRQCRIIAVDNSESMVARCQENLNAYVSDTDVDLVCGDIRDIDIQNASLVVLNFTLQFLPPEDRETLIAKIYQGLNPGGILVLSEKIRFEDAPIQTLLEEQHLDFKRANGYSELEISQKRSALENVMKPDTLTTHQQRLTSQGFSHFSLWFQCFNFASMVAIK.

S-adenosyl-L-methionine-binding positions include Tyr40, 65–67 (GCS), 90–91 (DN), 118–119 (DI), Asn133, and Arg200.

The protein belongs to the class I-like SAM-binding methyltransferase superfamily. Cx-SAM synthase family. In terms of assembly, homodimer.

It catalyses the reaction prephenate + S-adenosyl-L-methionine = carboxy-S-adenosyl-L-methionine + 3-phenylpyruvate + H2O. In terms of biological role, catalyzes the conversion of S-adenosyl-L-methionine (SAM) to carboxy-S-adenosyl-L-methionine (Cx-SAM). The protein is Carboxy-S-adenosyl-L-methionine synthase of Shewanella baltica (strain OS155 / ATCC BAA-1091).